The primary structure comprises 1132 residues: Phospholipid-transporting ATPase IG (1132 aa).

Residues 1–66 are Cytoplasmic-facing; the sequence is MQMVPSLPPA…NFLPKNLFEQ (66 aa). Residues 67–85 traverse the membrane as a helical segment; the sequence is FRRIANFYFLIIFLVQVTV. A topological domain (extracellular) is located at residue Asp86. Residues 87–107 form a helical membrane-spanning segment; sequence TPTSPVTSGLPLFFVITVTAI. At 108 to 290 the chain is on the cytoplasmic side; it reads KQGYEDCLRH…SQKRSAVEKS (183 aa). Residues 291–311 form a helical membrane-spanning segment; it reads INAFLIVYLFILLTKAAVCTT. The Extracellular portion of the chain corresponds to 312–346; sequence LKYVWQSTPYNDEPWYNQKTQKERETLKVLKMFTD. A helical transmembrane segment spans residues 347 to 367; that stretch reads FLSFMVLFNFIIPVSMYVTVE. Residues 368–879 lie on the Cytoplasmic side of the membrane; sequence MQKFLGSFFI…YVRIAHLVQY (512 aa). Asp412 serves as the catalytic 4-aspartylphosphate intermediate. The ATP site is built by Asp412, Lys413, and Thr414. Residue Asp412 participates in Mg(2+) binding. Thr414 provides a ligand contact to Mg(2+). Ser445 carries the phosphoserine modification. ATP is bound by residues Glu501, Phe543, Lys566, Arg597, Thr677, Gly678, Asp679, Arg792, and Lys798. Asp819 lines the Mg(2+) pocket. Residues Asn822 and Asp823 each contribute to the ATP site. Asp823 serves as a coordination point for Mg(2+). The helical transmembrane segment at 880–900 threads the bilayer; it reads FFYKNLCFILPQFLYQFFCGF. Topologically, residues 901–908 are extracellular; it reads SQQPLYDA. Residues 909–929 traverse the membrane as a helical segment; that stretch reads AYLTMYNICFTSLPILAYSLL. Over 930–955 the chain is Cytoplasmic; sequence EQHINIDTLTSDPRLYMKISGNAMLQ. The helical transmembrane segment at 956 to 976 threads the bilayer; the sequence is LGPFLYWTFLAAFEGTVFFFG. Topologically, residues 977–995 are extracellular; sequence TYFLFQTASLEENGKVYGN. A helical transmembrane segment spans residues 996-1016; sequence WTFGTIVFTVLVFTVTLKLAL. Residues 1017-1026 lie on the Cytoplasmic side of the membrane; it reads DTRFWTWINH. A helical transmembrane segment spans residues 1027 to 1047; sequence FVIWGSLAFYVFFSFFWGGII. Residues 1048–1069 lie on the Extracellular side of the membrane; it reads WPFLKQQRMYFVFAQMLSSVST. Residues 1070 to 1090 traverse the membrane as a helical segment; sequence WLAIILLIFISLFPEILLIVL. Residues 1091–1132 are Cytoplasmic-facing; the sequence is KNVRRRSARRNLSCRRASDSLSARPSVRPLLLRTFSDESNVL. Ser1108, Ser1116, and Ser1126 each carry phosphoserine. Residues 1116–1121 carry the Di-leucine motif motif; sequence SVRPLL.

The protein belongs to the cation transport ATPase (P-type) (TC 3.A.3) family. Type IV subfamily. Component of a P4-ATPase flippase complex which consists of a catalytic alpha subunit ATP11C and an accessory beta subunit TMEM30A. Requires Mg(2+) as cofactor. Proteolytically cleaved by CASP3, CASP6 and CASP7. Post-translationally, phosphorylated at Ser-1116 likely by PRKCA; this creates a functional di-leucine motif that is sufficient for endocytosis. In terms of tissue distribution, widely expressed.

It is found in the cell membrane. The protein localises to the endoplasmic reticulum membrane. The protein resides in the early endosome membrane. Its subcellular location is the recycling endosome membrane. It carries out the reaction ATP + H2O + phospholipidSide 1 = ADP + phosphate + phospholipidSide 2.. It catalyses the reaction a 1,2-diacyl-sn-glycero-3-phospho-L-serine(out) + ATP + H2O = a 1,2-diacyl-sn-glycero-3-phospho-L-serine(in) + ADP + phosphate + H(+). The catalysed reaction is a 1,2-diacyl-sn-glycero-3-phosphoethanolamine(out) + ATP + H2O = a 1,2-diacyl-sn-glycero-3-phosphoethanolamine(in) + ADP + phosphate + H(+). The flippase activity is inactivated by caspase-mediated cleavage in apoptotic cells, allowing for PS exposure on the cell surface and engulfment of apoptotic cells by macrophages. The ATPase activity is up-regulated by aminophospholipids PS and PE and down-regulated by Increasing intracellular Ca2+ levels. Catalytic component of a P4-ATPase flippase complex which catalyzes the hydrolysis of ATP coupled to the transport of aminophospholipids, phosphatidylserines (PS) and phosphatidylethanolamines (PE), from the outer to the inner leaflet of the plasma membrane. Major PS-flippase in immune cell subsets. In erythrocyte plasma membrane, it is required to maintain PS in the inner leaflet preventing its exposure on the surface. This asymmetric distribution is critical for the survival of erythrocytes in circulation since externalized PS is a phagocytic signal for erythrocyte clearance by splenic macrophages. Required for B cell differentiation past the pro-B cell stage. Seems to mediate PS flipping in pro-B cells. May be involved in the transport of cholestatic bile acids. The chain is Phospholipid-transporting ATPase IG from Homo sapiens (Human).